The following is a 156-amino-acid chain: 6,7-dimethyl-8-ribityllumazine synthase (156 aa).

5-amino-6-(D-ribitylamino)uracil is bound by residues F22, 57 to 59 (AYE), and 81 to 83 (TVI). 86 to 87 (GT) contributes to the (2S)-2-hydroxy-3-oxobutyl phosphate binding site. H89 acts as the Proton donor in catalysis. F114 contributes to the 5-amino-6-(D-ribitylamino)uracil binding site. Position 128 (R128) interacts with (2S)-2-hydroxy-3-oxobutyl phosphate.

The protein belongs to the DMRL synthase family. Forms an icosahedral capsid composed of 60 subunits, arranged as a dodecamer of pentamers.

The catalysed reaction is (2S)-2-hydroxy-3-oxobutyl phosphate + 5-amino-6-(D-ribitylamino)uracil = 6,7-dimethyl-8-(1-D-ribityl)lumazine + phosphate + 2 H2O + H(+). It functions in the pathway cofactor biosynthesis; riboflavin biosynthesis; riboflavin from 2-hydroxy-3-oxobutyl phosphate and 5-amino-6-(D-ribitylamino)uracil: step 1/2. Catalyzes the formation of 6,7-dimethyl-8-ribityllumazine by condensation of 5-amino-6-(D-ribitylamino)uracil with 3,4-dihydroxy-2-butanone 4-phosphate. This is the penultimate step in the biosynthesis of riboflavin. The polypeptide is 6,7-dimethyl-8-ribityllumazine synthase (Edwardsiella ictaluri (strain 93-146)).